A 438-amino-acid chain; its full sequence is Phosphatidylcholine-sterol acyltransferase (438 aa).

The signal sequence occupies residues 1 to 24 (MGLPGSPWQRVLLLLGLLLPPATP). An N-linked (GlcNAc...) asparagine glycan is attached at Asn44. A disulfide bridge links Cys74 with Cys98. Asn108 carries N-linked (GlcNAc...) asparagine glycosylation. Catalysis depends on Ser205, which acts as the Nucleophile. N-linked (GlcNAc...) asparagine glycosylation is present at Asn296. Cys337 and Cys380 are disulfide-bonded. The active-site Charge relay system is the Asp369. Asn397 is a glycosylation site (N-linked (GlcNAc...) asparagine). His401 acts as the Charge relay system in catalysis. N-linked (GlcNAc...) asparagine glycosylation is present at Asn408.

This sequence belongs to the AB hydrolase superfamily. Lipase family. As to expression, detected in blood plasma. Produced and secreted by astrocytes (at protein level). Abundantly expressed in liver, brain and testis with highest levels in liver. In the brain, found in cerebellum, cerebral cortex, hippocampus and brain stem. Located to neurons and neuroglia.

The protein resides in the secreted. The enzyme catalyses a sterol + a 1,2-diacyl-sn-glycero-3-phosphocholine = a sterol ester + a 1-acyl-sn-glycero-3-phosphocholine. It carries out the reaction a 1-O-alkyl-2-acetyl-sn-glycero-3-phosphocholine + H2O = a 1-O-alkyl-sn-glycero-3-phosphocholine + acetate + H(+). The catalysed reaction is a 1-hexadecanoyl-2-acyl-sn-glycero-3-phosphocholine + (24S)-hydroxycholesterol = (24S)-24-hydroxycholesterol ester + 1-hexadecanoyl-sn-glycero-3-phosphocholine. It catalyses the reaction (24S)-hydroxycholesterol + 1-hexadecanoyl-2-(9Z,12Z-octadecadienoyl)-sn-glycero-3-phosphocholine = (24S)-hydroxycholesterol 3-linoleoate + 1-hexadecanoyl-sn-glycero-3-phosphocholine. The enzyme catalyses 1-hexadecanoyl-2-(5Z,8Z,11Z,14Z-eicosatetraenoyl)-sn-glycero-3-phosphocholine + cholesterol = cholesteryl (5Z,8Z,11Z,14Z)-eicosatetraenoate + 1-hexadecanoyl-sn-glycero-3-phosphocholine. It carries out the reaction 1-hexadecanoyl-2-(9Z-octadecenoyl)-sn-glycero-3-phosphocholine + cholesterol = cholesteryl (9Z-octadecenoate) + 1-hexadecanoyl-sn-glycero-3-phosphocholine. The catalysed reaction is 1-hexadecanoyl-2-(8Z,11Z,14Z-eicosatrienoyl)-sn-glycero-3-phosphocholine + cholesterol = cholesteryl (8Z,11Z,14Z)-eicosatrienoate + 1-hexadecanoyl-sn-glycero-3-phosphocholine. It catalyses the reaction 1-hexadecanoyl-2-(5Z,8Z,11Z-eicosatrienoyl)-sn-glycero-3-phosphocholine + cholesterol = cholesteryl (5Z,8Z,11Z)-eicosatrienoate + 1-hexadecanoyl-sn-glycero-3-phosphocholine. The enzyme catalyses 1-hexadecanoyl-2-(5Z,8Z,11Z,14Z,17Z-eicosapentaenoyl)-sn-glycero-3-phosphocholine + cholesterol = (5Z,8Z,11Z,14Z,17Z-eicosapentaenoyl)-cholesterol + 1-hexadecanoyl-sn-glycero-3-phosphocholine. It carries out the reaction 1-hexadecanoyl-2-(9Z,12Z-octadecadienoyl)-sn-glycero-3-phosphocholine + cholesterol = cholesteryl (9Z,12Z)-octadecadienoate + 1-hexadecanoyl-sn-glycero-3-phosphocholine. The catalysed reaction is 1-hexadecanoyl-2-(6Z,9Z,12Z-octadecatrienoyl)-sn-glycero-3-phosphocholine + cholesterol = (6Z,9Z,12Z-octadecatrienoyl)-cholesterol + 1-hexadecanoyl-sn-glycero-3-phosphocholine. It catalyses the reaction 1-hexadecanoyl-2-(11Z,14Z,17Z-eicosatrienoyl)-sn-glycero-3-phosphocholine + cholesterol = (11Z,14Z,17Z-eicosatrienoyl)-cholesterol + 1-hexadecanoyl-sn-glycero-3-phosphocholine. The enzyme catalyses 1-hexadecanoyl-2-(9Z,12Z,15Z-octadecatrienoyl)-sn-glycero-3-phosphocholine + cholesterol = (9Z,12Z,15Z-octadecatrienoyl)-cholesterol + 1-hexadecanoyl-sn-glycero-3-phosphocholine. It carries out the reaction 1-hexadecanoyl-2-(9Z,12Z-octadecadienoyl)-sn-glycero-3-phosphocholine + H2O = (9Z,12Z)-octadecadienoate + 1-hexadecanoyl-sn-glycero-3-phosphocholine + H(+). The catalysed reaction is 1-hexadecanoyl-2-(5Z,8Z,11Z,14Z-eicosatetraenoyl)-sn-glycero-3-phosphocholine + H2O = 1-hexadecanoyl-sn-glycero-3-phosphocholine + (5Z,8Z,11Z,14Z)-eicosatetraenoate + H(+). It catalyses the reaction a 1-O-alkyl-2-acetyl-sn-glycero-3-phosphocholine + 1-hexadecanoyl-sn-glycero-3-phosphocholine = 1-hexadecanoyl-2-acetyl-sn-glycero-3-phosphocholine + a 1-O-alkyl-sn-glycero-3-phosphocholine. APOA1 is the most potent activator in plasma. Also activated by APOE, APOC1 and APOA4. Central enzyme in the extracellular metabolism of plasma lipoproteins. Synthesized mainly in the liver and secreted into plasma where it converts cholesterol and phosphatidylcholines (lecithins) to cholesteryl esters and lysophosphatidylcholines on the surface of high and low density lipoproteins (HDLs and LDLs). The cholesterol ester is then transported back to the liver. Also produced in the brain by primary astrocytes, and esterifies free cholesterol on nascent APOE-containing lipoproteins secreted from glia and influences cerebral spinal fluid (CSF) APOE- and APOA1 levels. Together with APOE and the cholesterol transporter ABCA1, plays a key role in the maturation of glial-derived, nascent lipoproteins. Required for remodeling high-density lipoprotein particles into their spherical forms. Has a preference for plasma 16:0-18:2 or 18:O-18:2 phosphatidylcholines. Catalyzes the hydrolysis of 1-O-alkyl-2-acetyl-sn-glycero-3-phosphocholine (platelet-activating factor or PAF) to 1-O-alkyl-sn-glycero-3-phosphocholine (lyso-PAF). Also catalyzes the transfer of the acetate group from PAF to 1-hexadecanoyl-sn-glycero-3-phosphocholine forming lyso-PAF. Catalyzes the esterification of (24S)-hydroxycholesterol (24(S)OH-C), also known as cerebrosterol to produce 24(S)OH-C monoesters. This is Phosphatidylcholine-sterol acyltransferase (Lcat) from Mus musculus (Mouse).